We begin with the raw amino-acid sequence, 757 residues long: 5-methyltetrahydropteroyltriglutamate--homocysteine methyltransferase (757 aa).

5-methyltetrahydropteroyltri-L-glutamate contacts are provided by residues 17 to 20 (RELK) and K117. L-homocysteine-binding positions include 432–434 (IGS) and E485. L-methionine is bound by residues 432 to 434 (IGS) and E485. 5-methyltetrahydropteroyltri-L-glutamate-binding positions include 516 to 517 (RC) and W562. Residue D600 participates in L-homocysteine binding. Residue D600 participates in L-methionine binding. Position 606 (E606) interacts with 5-methyltetrahydropteroyltri-L-glutamate. Zn(2+) is bound by residues H642, C644, and E666. The Proton donor role is filled by H695. Residue C727 participates in Zn(2+) binding.

This sequence belongs to the vitamin-B12 independent methionine synthase family. The cofactor is Zn(2+).

It carries out the reaction 5-methyltetrahydropteroyltri-L-glutamate + L-homocysteine = tetrahydropteroyltri-L-glutamate + L-methionine. Its pathway is amino-acid biosynthesis; L-methionine biosynthesis via de novo pathway; L-methionine from L-homocysteine (MetE route): step 1/1. Catalyzes the transfer of a methyl group from 5-methyltetrahydrofolate to homocysteine resulting in methionine formation. This chain is 5-methyltetrahydropteroyltriglutamate--homocysteine methyltransferase, found in Erwinia tasmaniensis (strain DSM 17950 / CFBP 7177 / CIP 109463 / NCPPB 4357 / Et1/99).